The chain runs to 860 residues: Leucine--tRNA ligase (860 aa).

Residues 42–52 (PYPSGRLHMGH) carry the 'HIGH' region motif. Positions 619–623 (KMSKS) match the 'KMSKS' region motif. Residue lysine 622 coordinates ATP.

This sequence belongs to the class-I aminoacyl-tRNA synthetase family.

It is found in the cytoplasm. The catalysed reaction is tRNA(Leu) + L-leucine + ATP = L-leucyl-tRNA(Leu) + AMP + diphosphate. The protein is Leucine--tRNA ligase of Shigella dysenteriae serotype 1 (strain Sd197).